Consider the following 280-residue polypeptide: Eukaryotic translation initiation factor 3 subunit F-1 (280 aa).

The MPN domain occupies 8–138; that stretch reads VRVHPVVLFQ…LRAYVCIQLG (131 aa).

The protein belongs to the eIF-3 subunit F family. Component of the eukaryotic translation initiation factor 3 (eIF-3) complex. The eIF-3 complex interacts with pix.

The protein resides in the cytoplasm. Its function is as follows. Component of the eukaryotic translation initiation factor 3 (eIF-3) complex, which is involved in protein synthesis of a specialized repertoire of mRNAs and, together with other initiation factors, stimulates binding of mRNA and methionyl-tRNAi to the 40S ribosome. The eIF-3 complex specifically targets and initiates translation of a subset of mRNAs involved in cell proliferation. This Drosophila virilis (Fruit fly) protein is Eukaryotic translation initiation factor 3 subunit F-1.